The sequence spans 262 residues: UPF0758 protein R01728 (262 aa).

The disordered stretch occupies residues 23 to 44 (PEKRTRNSPATAPAPATDTHYH). Residues 31–40 (PATAPAPATD) are compositionally biased toward low complexity. An MPN domain is found at 140-262 (VLSSWSAVID…HVSLKGLRLF (123 aa)). Zn(2+) contacts are provided by histidine 211, histidine 213, and aspartate 224. The short motif at 211–224 (HNHPSGDPTPSRAD) is the JAMM motif element.

The protein belongs to the UPF0758 family.

The polypeptide is UPF0758 protein R01728 (Rhizobium meliloti (strain 1021) (Ensifer meliloti)).